Reading from the N-terminus, the 1072-residue chain is E3 ubiquitin-protein ligase RNF31 (1072 aa).

The interval 1-485 (MPGEEEERAF…PEKQRQDKMR (485 aa)) is polyubiquitin-binding. One can recognise a PUB domain in the interval 71-142 (TLSTALNILE…SFPEGQEEPD (72 aa)). Residues 263-290 (QGTHLSPSLPASAQPRPQSTSLLALGDS) form a disordered region. Residues 265–280 (THLSPSLPASAQPRPQ) are compositionally biased toward polar residues. Low complexity predominate over residues 281-290 (STSLLALGDS). 2 RanBP2-type zinc fingers span residues 299-329 (SAHLPWHCAACAMLNEPWAVLCVACDRPRGC) and 350-379 (ARGRWACQSCTFENEAAAVLCSICERPRLA). Residue S383 is modified to Phosphoserine. The segment at 409 to 438 (QSQVWYCIHCTFCNSSPGWVCVMCNRTSSP) adopts a RanBP2-type 3 zinc-finger fold. The segment at 443 to 484 (HAPRPYASSLEKGPPKPGPPRRLSAPLPSSCGDPEKQRQDKM) is disordered. Low complexity predominate over residues 463-472 (RRLSAPLPSS). Phosphoserine is present on S466. Residues 475–484 (DPEKQRQDKM) are compositionally biased toward basic and acidic residues. An interaction with RBCK1 region spans residues 563 to 616 (GNLDEAVEECVRTRRRKVQELQSLGFGPEEGSLQALFQHGGDVSRALTELQRQR). Positions 564-615 (NLDEAVEECVRTRRRKVQELQSLGFGPEEGSLQALFQHGGDVSRALTELQRQ) constitute a UBA domain. The interval 695–929 (LAQECAVCGW…KSLHGHHPRD (235 aa)) is TRIAD supradomain. Positions 699, 702, 717, 719, 722, and 725 each coordinate Zn(2+). An RING-type 1 zinc finger spans residues 699–749 (CAVCGWALPHNRMQALTSCECTICPDCFRQHFTIALKEKHITDMVCPACGR). K735 participates in a covalent cross-link: (Microbial infection) Glycyl lysine isopeptide (Lys-Gly) (interchain with G-Cter in ubiquitin). Residues C744 and C747 each contribute to the Zn(2+) site. The IBR-type zinc finger occupies 779–841 (ALFHKKLTEG…WEEQHRGRSC (63 aa)). K783 participates in a covalent cross-link: (Microbial infection) Glycyl lysine isopeptide (Lys-Gly) (interchain with G-Cter in ubiquitin). The Zn(2+) site is built by C799, C802, C817, C820, C825, C828, H836, C841, C871, and C874. The segment at 871-901 (CPKCKFSYALARGGCMHFHCTQCRHQFCSGC) adopts an RING-type 2; atypical zinc-finger fold. Residue K875 forms a (Microbial infection) Glycyl lysine isopeptide (Lys-Gly) (interchain with G-Cter in ubiquitin) linkage. The active site involves C885. Positions 890, 893, 898, 901, 916, and 925 each coordinate Zn(2+). An LDD domain region spans residues 910–1072 (KCPEPNCRVK…LGQSIPRRRK (163 aa)).

It belongs to the RBR family. In terms of assembly, component of the LUBAC complex (linear ubiquitin chain assembly complex) which consists of SHARPIN, RBCK1 and RNF31. LUBAC has a MW of approximately 600 kDa suggesting a heteromultimeric assembly of its subunits. Associates with the TNF-R1 signaling complex (TNF-RSC) in a stimulation-dependent manner. Interacts (via the PUB domain) with OTULIN (via the PIM motif); the interaction is direct. Interacts (via the PUB domain) with VCP (via the PIM motif). Interacts (via the PUB domain) with SPATA2 (via the PIM motif); interaction is direct and bridges RNF31 and CYLD. Interacts with CYLD; the interaction is indirect and is mediated via SPATA2. Interacts with MUSK. Interacts with CARD11, promoting linear ubiquitination of BCL10. (Microbial infection) Interacts with S.flexneri E3 ubiquitin-protein ligases IpaH1.4 and IpaH2.5, leading to its ubiquitination. Post-translationally, autoubiquitinated. Interaction with OTULIN is required to suppress formation of 'Met-1'-linked polyubiquitin chains and prevent subsequent inactivation of the LUBAC complex. Cleaved by caspase during apoptosis. In terms of processing, (Microbial infection) Ubiquitinated by S.flexneri E3 ubiquitin-protein ligases IpaH1.4 and IpaH2.5, leading to its degradation by the proteasome, thereby preventing formation of the bacterial ubiquitin coat and activation of innate immunity. Expressed in both normal and transformed breast epithelial cell lines.

It localises to the cytoplasm. The catalysed reaction is [E2 ubiquitin-conjugating enzyme]-S-ubiquitinyl-L-cysteine + [acceptor protein]-L-lysine = [E2 ubiquitin-conjugating enzyme]-L-cysteine + [acceptor protein]-N(6)-ubiquitinyl-L-lysine.. Its pathway is protein modification; protein ubiquitination. In terms of biological role, E3 ubiquitin-protein ligase component of the LUBAC complex which conjugates linear ('Met-1'-linked) polyubiquitin chains to substrates and plays a key role in NF-kappa-B activation and regulation of inflammation. LUBAC conjugates linear polyubiquitin to IKBKG and RIPK1 and is involved in activation of the canonical NF-kappa-B and the JNK signaling pathways. Linear ubiquitination mediated by the LUBAC complex interferes with TNF-induced cell death and thereby prevents inflammation. LUBAC is recruited to the TNF-R1 signaling complex (TNF-RSC) following polyubiquitination of TNF-RSC components by BIRC2 and/or BIRC3 and to conjugate linear polyubiquitin to IKBKG and possibly other components contributing to the stability of the complex. The LUBAC complex is also involved in innate immunity by conjugating linear polyubiquitin chains at the surface of bacteria invading the cytosol to form the ubiquitin coat surrounding bacteria. LUBAC is not able to initiate formation of the bacterial ubiquitin coat, and can only promote formation of linear polyubiquitins on pre-existing ubiquitin. Recruited to the surface of bacteria by RNF213, which initiates the bacterial ubiquitin coat. The bacterial ubiquitin coat acts as an 'eat-me' signal for xenophagy and promotes NF-kappa-B activation. Together with OTULIN, the LUBAC complex regulates the canonical Wnt signaling during angiogenesis. RNF31 is required for linear ubiquitination of BCL10, thereby promoting TCR-induced NF-kappa-B activation. Binds polyubiquitin of different linkage types. This Homo sapiens (Human) protein is E3 ubiquitin-protein ligase RNF31.